A 557-amino-acid polypeptide reads, in one-letter code: Anti-Muellerian hormone type-2 receptor (557 aa).

Positions 1–17 (MLGTLGLWTLLPAAAQV) are cleaved as a signal peptide. Over 18 to 144 (SPNRRTCVFF…QEPQATPGGP (127 aa)) the chain is Extracellular. Cystine bridges form between Cys-55/Cys-79 and Cys-92/Cys-109. Asn-66 carries N-linked (GlcNAc...) asparagine glycosylation. Residue Asn-119 is glycosylated (N-linked (GlcNAc...) asparagine). A helical transmembrane segment spans residues 145-165 (IWMAQLLLGVFLVLLLSIIIL). Residues 166 to 557 (ALLQRKACRV…SVQQGSGSKS (392 aa)) are Cytoplasmic-facing. Positions 201-511 (LRFSQVIQEG…RLAALAYPQV (311 aa)) constitute a Protein kinase domain. Residues 207–215 (IQEGGHAVV) and Lys-228 each bind ATP. The active-site Proton acceptor is the Asp-331.

The protein belongs to the protein kinase superfamily. TKL Ser/Thr protein kinase family. TGFB receptor subfamily. Interacts with type I receptor ACVR1. Mg(2+) serves as cofactor. Requires Mn(2+) as cofactor.

Its subcellular location is the membrane. It catalyses the reaction L-threonyl-[receptor-protein] + ATP = O-phospho-L-threonyl-[receptor-protein] + ADP + H(+). The enzyme catalyses L-seryl-[receptor-protein] + ATP = O-phospho-L-seryl-[receptor-protein] + ADP + H(+). In terms of biological role, on ligand binding, forms a receptor complex consisting of two type II and two type I transmembrane serine/threonine kinases. Type II receptors phosphorylate and activate type I receptors which autophosphorylate, then bind and activate SMAD transcriptional regulators. Receptor for anti-Muellerian hormone. The chain is Anti-Muellerian hormone type-2 receptor (Amhr2) from Rattus norvegicus (Rat).